Here is a 187-residue protein sequence, read N- to C-terminus: Cytokinin riboside 5'-monophosphate phosphoribohydrolase (187 aa).

An Isoglutamyl lysine isopeptide (Lys-Gln) (interchain with Q-Cter in protein Pup) cross-link involves residue Lys74. Substrate contacts are provided by residues Glu80, Arg98–Lys99, Gly115–Glu121, and Thr127.

Belongs to the LOG family. As to quaternary structure, homodimer. Pupylated at Lys-74 by the prokaryotic ubiquitin-like protein Pup, which leads to its degradation by the proteasome. The proteasomal control of cytokinin synthesis is essential to protect M.tuberculosis against host-produced NO.

It catalyses the reaction N(6)-(dimethylallyl)adenosine 5'-phosphate + H2O = N(6)-dimethylallyladenine + D-ribose 5-phosphate. It carries out the reaction 9-ribosyl-trans-zeatin 5'-phosphate + H2O = trans-zeatin + D-ribose 5-phosphate. Catalyzes the hydrolytic removal of ribose 5'-monophosphate from nitrogen N6-modified adenosines, the final step of bioactive cytokinin synthesis. Is involved in the synthesis of isopentenyladenine (iP) and 2-methylthio-iP (2MeS-iP), the most abundant cytokinins detected in M.tuberculosis lysates and supernatants. Is also able to convert trans-zeatin-riboside monophosphate (tZRMP) to trans-zeatin (tZ) in vitro; however, it may not be involved in the biosynthesis of this minor cytokinin in vivo. Accumulation of Rv1205 sensitizes M.tuberculosis to nitric oxide since cytokinin breakdown products synergize with NO to kill M.tuberculosis. Shows a slow AMP hydrolase activity, but is not able to hydrolyze ATP. Displays no lysine decarboxylase (LDC) activity (L-lysine conversion to cadaverine). The sequence is that of Cytokinin riboside 5'-monophosphate phosphoribohydrolase from Mycobacterium tuberculosis (strain ATCC 25618 / H37Rv).